The primary structure comprises 428 residues: MKTSLFKSLYFQVLTAIAIGILLGHYYPELGAQMKPLGDAFVKLIKMIIAPVIFCTVVTGIAGMESMKAVGRTGAVALLYFEIVSTIALIIGLIIVNVVQPGAGMNVDPATLDAQAVAVYAAQAKEQGIIAFLMDIIPGSVIGAFASGNILQVLLFAVLFGFALHRLGSKGQLIFNVIESFSQVIFGIINMIMRLAPIGAFGAMAFTIGKYGVGSLVQLGQLIICFYITCILFVVVVLGTIARVTGFSIFKFIRYIREELLIVLGTSSSESALPRMLDKMEKLGCRKSVVGLVIPTGYSFNLDGTSIYLTMAAVFIAQATNSHMDIFHQITLLVVLLLSSKGAAGVTGSGFIVLAATISAVGHLPVAGLALILGIDRFMSEARALTNLVGNGVATVVVAKWVKELDRQKLDDVLNNRAPDGKTHEISS.

The next 9 membrane-spanning stretches (helical) occupy residues 4–24 (SLFK…ILLG), 44–64 (LIKM…IAGM), 76–96 (VALL…LIIV), 142–162 (IGAF…LFGF), 184–204 (VIFG…FGAM), 222–242 (LIIC…GTIA), 289–309 (VVGL…SIYL), 326–346 (IFHQ…AAGV), and 352–372 (IVLA…LALI).

The protein belongs to the dicarboxylate/amino acid:cation symporter (DAACS) (TC 2.A.23) family.

The protein resides in the cell inner membrane. Its function is as follows. Responsible for the transport of dicarboxylates such as succinate, fumarate, and malate from the periplasm across the membrane. The chain is C4-dicarboxylate transport protein from Salmonella arizonae (strain ATCC BAA-731 / CDC346-86 / RSK2980).